We begin with the raw amino-acid sequence, 436 residues long: MPIFIDRRLNPKDKSLGNRQRFLRRAREELKRSIRDKVRAGGIAELDREHVVPIPRKGTGEPTFGDDKESGRRQHILPGNRTFSSGDLIPKPGGGGGYGSAAGTTESEDDFRFVLSREEVLDLFFEDLELPDLVKLNLKQVLSFKPRRAGFAASGAPTNINVGRTMRNSHGRRIALRRPKQAELDAIARQIAELEAKPASALVRERIAALREALDRLERRRKRIAYVDPVDIRFNRFDPQPLPNANAVMFCLMDVSGSMGEREKDLAKRFFVLLHLFLTRRYERTDIVFIRHTHLAKEVDEHTFFYHTESGGTVVSTALEEMHRIIEQRYPVAEWNIYAAQASDGDNFAGDSERCIELLDRKLMRLCQYFAYVEIIDERESHIFGATENGTSLWRAYNAVDGKWPNFQMRRIAAPADIYPVFRQLFARQPDLRKSA.

The tract at residues isoleucine 54–glycine 103 is disordered.

It belongs to the UPF0229 family.

This chain is UPF0229 protein mll9637, found in Mesorhizobium japonicum (strain LMG 29417 / CECT 9101 / MAFF 303099) (Mesorhizobium loti (strain MAFF 303099)).